The primary structure comprises 353 residues: Protein RecA (353 aa).

68-75 (GPESSGKT) contributes to the ATP binding site.

The protein belongs to the RecA family.

The protein resides in the cytoplasm. Functionally, can catalyze the hydrolysis of ATP in the presence of single-stranded DNA, the ATP-dependent uptake of single-stranded DNA by duplex DNA, and the ATP-dependent hybridization of homologous single-stranded DNAs. It interacts with LexA causing its activation and leading to its autocatalytic cleavage. In Roseiflexus castenholzii (strain DSM 13941 / HLO8), this protein is Protein RecA.